Consider the following 42-residue polypeptide: Large ribosomal subunit protein bL36 (42 aa).

The protein belongs to the bacterial ribosomal protein bL36 family.

The sequence is that of Large ribosomal subunit protein bL36 from Anaplasma marginale (strain St. Maries).